An 80-amino-acid chain; its full sequence is Cell division protein ZapB (80 aa).

A coiled-coil region spans residues 3-80 (FEVLEKLEAK…SLLGKMEDVE (78 aa)).

It belongs to the ZapB family. In terms of assembly, homodimer. The ends of the coiled-coil dimer bind to each other, forming polymers. Interacts with FtsZ.

The protein resides in the cytoplasm. Its function is as follows. Non-essential, abundant cell division factor that is required for proper Z-ring formation. It is recruited early to the divisome by direct interaction with FtsZ, stimulating Z-ring assembly and thereby promoting cell division earlier in the cell cycle. Its recruitment to the Z-ring requires functional FtsA or ZipA. The sequence is that of Cell division protein ZapB from Vibrio cholerae serotype O1 (strain ATCC 39541 / Classical Ogawa 395 / O395).